The chain runs to 419 residues: UDP-N-acetylglucosamine 1-carboxyvinyltransferase (419 aa).

Residue lysine 22–asparagine 23 participates in phosphoenolpyruvate binding. Arginine 91 provides a ligand contact to UDP-N-acetyl-alpha-D-glucosamine. Catalysis depends on cysteine 115, which acts as the Proton donor. At cysteine 115 the chain carries 2-(S-cysteinyl)pyruvic acid O-phosphothioketal. UDP-N-acetyl-alpha-D-glucosamine-binding positions include arginine 120–leucine 124, lysine 160–valine 163, aspartate 305, and isoleucine 327.

It belongs to the EPSP synthase family. MurA subfamily.

Its subcellular location is the cytoplasm. It carries out the reaction phosphoenolpyruvate + UDP-N-acetyl-alpha-D-glucosamine = UDP-N-acetyl-3-O-(1-carboxyvinyl)-alpha-D-glucosamine + phosphate. The protein operates within cell wall biogenesis; peptidoglycan biosynthesis. Cell wall formation. Adds enolpyruvyl to UDP-N-acetylglucosamine. The protein is UDP-N-acetylglucosamine 1-carboxyvinyltransferase of Serratia proteamaculans (strain 568).